Consider the following 540-residue polypeptide: Chaperonin GroEL (540 aa).

Residues 30-33, lysine 51, 87-91, glycine 415, and aspartate 495 each bind ATP; these read TLGP and DGTTT.

The protein belongs to the chaperonin (HSP60) family. As to quaternary structure, forms a cylinder of 14 subunits composed of two heptameric rings stacked back-to-back. Interacts with the co-chaperonin GroES.

The protein localises to the cytoplasm. It catalyses the reaction ATP + H2O + a folded polypeptide = ADP + phosphate + an unfolded polypeptide.. Its function is as follows. Together with its co-chaperonin GroES, plays an essential role in assisting protein folding. The GroEL-GroES system forms a nano-cage that allows encapsulation of the non-native substrate proteins and provides a physical environment optimized to promote and accelerate protein folding. The sequence is that of Chaperonin GroEL from Erwinia aphidicola.